The sequence spans 412 residues: Putative competence-damage inducible protein (412 aa).

The protein belongs to the CinA family.

The polypeptide is Putative competence-damage inducible protein (Clostridium perfringens (strain SM101 / Type A)).